An 831-amino-acid polypeptide reads, in one-letter code: Isethionate sulfite-lyase (831 aa).

Residues 32 to 701 (PRVFRLLERF…VVSATPNGRT (670 aa)) enclose the PFL domain. Residues Arg-189, Gln-193, 468–470 (CTE), and Arg-679 each bind 2-hydroxyethane-1-sulfonate. Cys-468 functions as the Cysteine radical intermediate in the catalytic mechanism. Glu-470 functions as the Proton acceptor in the catalytic mechanism. Residues 708-831 (DGSSASHGAD…LIARTEHDVM (124 aa)) enclose the Glycine radical domain. At Gly-806 the chain carries Glycine radical.

The protein belongs to the glycyl radical enzyme (GRE) family. In terms of assembly, homodimer. Requires the activating protein IslB to generate the key active site glycyl radical on Gly-806 that is involved in catalysis.

It carries out the reaction 2-hydroxyethane-1-sulfonate = acetaldehyde + sulfite + H(+). It participates in organosulfur degradation; alkanesulfonate degradation. In terms of biological role, involved in an anaerobic respiration pathway that converts the sulfonate isethionate (2-hydroxyethanesulfonate) to ammonia, acetate and sulfide. Catalyzes the radical-mediated C-S bond cleavage of isethionate (2-hydroxyethanesulfonate) to form sulfite and acetaldehyde. The protein is Isethionate sulfite-lyase of Desulfovibrio desulfuricans (strain ATCC 27774 / DSM 6949 / MB).